The chain runs to 304 residues: MFMTESRLTHLKQLEAESIHIIREVAAEFENPVMLYSIGKDSAVMLHLALKAFYPAKLPFPLLHVDTGWKFKDMIAFRDNMAKTHGFDLIVHQNKEGREAGINPFDHGSSKYTDIMKTQALKQALDKYQFDAAFGGARRDEEKSRAKERVYSFRDSKHRWDPKNQRPELWNLYNGKVNKGESIRVFPLSNWTELDIWQYIYLENIQIVPLYFSAVRPVVERSGTLIMVDDERMRLKEGEVPQMKSVRFRTLGCYPLTGAVESEADTLPEIIQEMLLATSSERQGRMIDHDEAGSMEKKKQEGYF.

It belongs to the PAPS reductase family. CysD subfamily. As to quaternary structure, heterodimer composed of CysD, the smaller subunit, and CysN.

The catalysed reaction is sulfate + ATP + H(+) = adenosine 5'-phosphosulfate + diphosphate. The protein operates within sulfur metabolism; hydrogen sulfide biosynthesis; sulfite from sulfate: step 1/3. In terms of biological role, with CysN forms the ATP sulfurylase (ATPS) that catalyzes the adenylation of sulfate producing adenosine 5'-phosphosulfate (APS) and diphosphate, the first enzymatic step in sulfur assimilation pathway. APS synthesis involves the formation of a high-energy phosphoric-sulfuric acid anhydride bond driven by GTP hydrolysis by CysN coupled to ATP hydrolysis by CysD. The polypeptide is Sulfate adenylyltransferase subunit 2 (Acinetobacter baumannii (strain SDF)).